Consider the following 350-residue polypeptide: Methionine import ATP-binding protein MetN (350 aa).

One can recognise an ABC transporter domain in the interval 2 to 242 (IELKGISQHF…PRHDVTRALI (241 aa)). 39–46 (GRSGAGKS) serves as a coordination point for ATP.

Belongs to the ABC transporter superfamily. Methionine importer (TC 3.A.1.24) family. In terms of assembly, the complex is composed of two ATP-binding proteins (MetN), two transmembrane proteins (MetI) and a solute-binding protein (MetQ).

It is found in the cell inner membrane. The enzyme catalyses L-methionine(out) + ATP + H2O = L-methionine(in) + ADP + phosphate + H(+). It catalyses the reaction D-methionine(out) + ATP + H2O = D-methionine(in) + ADP + phosphate + H(+). Part of the ABC transporter complex MetNIQ involved in methionine import. Responsible for energy coupling to the transport system. This Ralstonia nicotianae (strain ATCC BAA-1114 / GMI1000) (Ralstonia solanacearum) protein is Methionine import ATP-binding protein MetN.